The sequence spans 155 residues: Ubiquitin-conjugating enzyme E2 14 (155 aa).

The region spanning 7-154 is the UBC core domain; sequence SSSRRLTKEY…ARDYVEQFAK (148 aa). The active-site Glycyl thioester intermediate is the Cys-91.

The protein belongs to the ubiquitin-conjugating enzyme family.

The catalysed reaction is S-ubiquitinyl-[E1 ubiquitin-activating enzyme]-L-cysteine + [E2 ubiquitin-conjugating enzyme]-L-cysteine = [E1 ubiquitin-activating enzyme]-L-cysteine + S-ubiquitinyl-[E2 ubiquitin-conjugating enzyme]-L-cysteine.. Its pathway is protein modification; protein ubiquitination. In terms of biological role, catalyzes the covalent attachment of ubiquitin to other proteins. Mediates the selective degradation of short-lived and abnormal proteins. The protein is Ubiquitin-conjugating enzyme E2 14 (ubc14) of Schizosaccharomyces pombe (strain 972 / ATCC 24843) (Fission yeast).